We begin with the raw amino-acid sequence, 209 residues long: Small ribosomal subunit protein uS4 (209 aa).

The 66-residue stretch at 99 to 164 (GRLDSVVYRM…QLRVKAALEA (66 aa)) folds into the S4 RNA-binding domain.

This sequence belongs to the universal ribosomal protein uS4 family. In terms of assembly, part of the 30S ribosomal subunit. Contacts protein S5. The interaction surface between S4 and S5 is involved in control of translational fidelity.

Its function is as follows. One of the primary rRNA binding proteins, it binds directly to 16S rRNA where it nucleates assembly of the body of the 30S subunit. In terms of biological role, with S5 and S12 plays an important role in translational accuracy. The polypeptide is Small ribosomal subunit protein uS4 (Aromatoleum aromaticum (strain DSM 19018 / LMG 30748 / EbN1) (Azoarcus sp. (strain EbN1))).